A 188-amino-acid polypeptide reads, in one-letter code: Elongation factor P (188 aa).

N6-(3,6-diaminohexanoyl)-5-hydroxylysine is present on K34.

Belongs to the elongation factor P family. In terms of processing, may be beta-lysylated on the epsilon-amino group of Lys-34 by the combined action of EpmA and EpmB, and then hydroxylated on the C5 position of the same residue by EpmC (if this protein is present). Lysylation is critical for the stimulatory effect of EF-P on peptide-bond formation. The lysylation moiety may extend toward the peptidyltransferase center and stabilize the terminal 3-CCA end of the tRNA. Hydroxylation of the C5 position on Lys-34 may allow additional potential stabilizing hydrogen-bond interactions with the P-tRNA.

The protein resides in the cytoplasm. It participates in protein biosynthesis; polypeptide chain elongation. Functionally, involved in peptide bond synthesis. Alleviates ribosome stalling that occurs when 3 or more consecutive Pro residues or the sequence PPG is present in a protein, possibly by augmenting the peptidyl transferase activity of the ribosome. Modification of Lys-34 is required for alleviation. The sequence is that of Elongation factor P from Pasteurella multocida (strain Pm70).